The primary structure comprises 341 residues: Uroporphyrinogen decarboxylase (341 aa).

Residues 23–27 (RQAGR), D73, Y147, S202, and H318 each bind substrate.

The protein belongs to the uroporphyrinogen decarboxylase family. Homodimer.

It localises to the cytoplasm. It carries out the reaction uroporphyrinogen III + 4 H(+) = coproporphyrinogen III + 4 CO2. It functions in the pathway porphyrin-containing compound metabolism; protoporphyrin-IX biosynthesis; coproporphyrinogen-III from 5-aminolevulinate: step 4/4. Catalyzes the decarboxylation of four acetate groups of uroporphyrinogen-III to yield coproporphyrinogen-III. In Novosphingobium aromaticivorans (strain ATCC 700278 / DSM 12444 / CCUG 56034 / CIP 105152 / NBRC 16084 / F199), this protein is Uroporphyrinogen decarboxylase.